A 367-amino-acid polypeptide reads, in one-letter code: 4-hydroxy-3-methylbut-2-en-1-yl diphosphate synthase (flavodoxin) (367 aa).

Residues C270, C273, C305, and E312 each contribute to the [4Fe-4S] cluster site.

It belongs to the IspG family. It depends on [4Fe-4S] cluster as a cofactor.

It carries out the reaction (2E)-4-hydroxy-3-methylbut-2-enyl diphosphate + oxidized [flavodoxin] + H2O + 2 H(+) = 2-C-methyl-D-erythritol 2,4-cyclic diphosphate + reduced [flavodoxin]. Its pathway is isoprenoid biosynthesis; isopentenyl diphosphate biosynthesis via DXP pathway; isopentenyl diphosphate from 1-deoxy-D-xylulose 5-phosphate: step 5/6. Converts 2C-methyl-D-erythritol 2,4-cyclodiphosphate (ME-2,4cPP) into 1-hydroxy-2-methyl-2-(E)-butenyl 4-diphosphate. This is 4-hydroxy-3-methylbut-2-en-1-yl diphosphate synthase (flavodoxin) from Pasteurella multocida (strain Pm70).